We begin with the raw amino-acid sequence, 49 residues long: Large ribosomal subunit protein bL33B (49 aa).

It belongs to the bacterial ribosomal protein bL33 family.

This is Large ribosomal subunit protein bL33B (rpmG2) from Lactococcus lactis subsp. lactis (strain IL1403) (Streptococcus lactis).